Reading from the N-terminus, the 100-residue chain is Urease subunit gamma (100 aa).

This sequence belongs to the urease gamma subunit family. In terms of assembly, heterotrimer of UreA (gamma), UreB (beta) and UreC (alpha) subunits. Three heterotrimers associate to form the active enzyme.

The protein resides in the cytoplasm. It catalyses the reaction urea + 2 H2O + H(+) = hydrogencarbonate + 2 NH4(+). It functions in the pathway nitrogen metabolism; urea degradation; CO(2) and NH(3) from urea (urease route): step 1/1. This chain is Urease subunit gamma, found in Streptomyces avermitilis (strain ATCC 31267 / DSM 46492 / JCM 5070 / NBRC 14893 / NCIMB 12804 / NRRL 8165 / MA-4680).